Here is a 119-residue protein sequence, read N- to C-terminus: Putative membrane protein insertion efficiency factor (119 aa).

Residues 82–119 are disordered; it reads NALRGEKGGESAADVPSGGSVSEPPGPAAETSPNAQGA.

The protein belongs to the UPF0161 family.

Its subcellular location is the cell membrane. In terms of biological role, could be involved in insertion of integral membrane proteins into the membrane. The chain is Putative membrane protein insertion efficiency factor from Streptomyces griseus subsp. griseus (strain JCM 4626 / CBS 651.72 / NBRC 13350 / KCC S-0626 / ISP 5235).